A 107-amino-acid polypeptide reads, in one-letter code: MSASLKNQQGFSLPEVMLAMVLMVMIVTALSGFQRTLMNSLASRNQYQQLWRHGWQQTQLRAISPPANWQVNRMQTSQAGCVSISVTLVSPGGREGEMTRLHCPNRQ.

A propeptide spanning residues Met-1–Gly-10 is cleaved from the precursor. Phe-11 is modified (N-methylphenylalanine). A helical membrane pass occupies residues Phe-11 to Leu-30.

Its subcellular location is the membrane. Functionally, not yet known. This chain is Prepilin peptidase-dependent protein C (ppdC), found in Escherichia coli (strain K12).